The primary structure comprises 122 residues: RxLR effector protein Avh52 (122 aa).

The signal sequence occupies residues 1–21 (MRLTSILVLVIAATFHTTGTA). A RxLR-dEER motif is present at residues 50-68 (RLLRRVEKDKVDYEQDEQR). The tract at residues 69-86 (SFGALKDAVKKLNPVTAV) is TAP1-binding. A nuclear localization signal (NLS) region spans residues 87-98 (KKFFKQRAKRKK).

It belongs to the RxLR effector family. In terms of assembly, interacts with host acetyl transferase TAP1.

The protein resides in the secreted. It is found in the host nucleus. Its function is as follows. Effector that suppresses plant defense responses during the early stages of pathogen infection. Suppresses cell death induced by effectors and PAMPs in plant hosts. Interacts with host acetyltransferase TAP1 and causes TAP1 relocation into the nucleus where it acetylates histones H2A and H3 during early infection, thereby promoting susceptibility of host plant to P.sojae. This is RxLR effector protein Avh52 from Phytophthora sojae (strain P6497) (Soybean stem and root rot agent).